The following is a 299-amino-acid chain: Taste receptor type 2 member 19 (299 aa).

Met1 is a topological domain (extracellular). The helical transmembrane segment at 2 to 22 (MCFLLIISSILVVFAFVLGNV) threads the bilayer. Topologically, residues 23 to 55 (ANGFIALVNVIDWVNTRKISSAEQILTALVVSR) are cytoplasmic. The helical transmembrane segment at 56 to 76 (IGLLWVMLFLWYATVFNSALY) threads the bilayer. The Extracellular segment spans residues 77 to 87 (GLEVRIVASNA). The chain crosses the membrane as a helical span at residues 88–108 (WAVTNHFSMWLAASLSIFCLL). Residues 109–127 (KIANFSNLISLHLKKRIKS) lie on the Cytoplasmic side of the membrane. Residues 128 to 148 (VVLVILLGPLVFLICNLAVIT) traverse the membrane as a helical segment. At 149-181 (MDERVWTKEYEGNVTWKIKLRNAIHLSSLTVTT) the chain is on the extracellular side. N-linked (GlcNAc...) asparagine glycosylation occurs at Asn161. The chain crosses the membrane as a helical span at residues 182-202 (LANLIPFTLSLICFLLLICSL). The Cytoplasmic portion of the chain corresponds to 203–226 (CKHLKKMRLHSKGSQDPSTKVHIK). The helical transmembrane segment at 227-247 (ALQTVTSFLMLFAIYFLCIIT) threads the bilayer. The Extracellular segment spans residues 248 to 259 (STWNLRTQQSKL). A helical membrane pass occupies residues 260-280 (VLLLCQTVAIMYPSFHSFILI). The Cytoplasmic segment spans residues 281–299 (MGSRKLKQTFLSVLWQMTR).

This sequence belongs to the G-protein coupled receptor T2R family. As to expression, expressed in subsets of taste receptor cells of the tongue and exclusively in gustducin-positive cells.

It is found in the membrane. Functionally, receptor that may play a role in the perception of bitterness and is gustducin-linked. May play a role in sensing the chemical composition of the gastrointestinal content. The activity of this receptor may stimulate alpha gustducin, mediate PLC-beta-2 activation and lead to the gating of TRPM5. This Homo sapiens (Human) protein is Taste receptor type 2 member 19 (TAS2R19).